Here is a 468-residue protein sequence, read N- to C-terminus: UDP-glycosyltransferase 89B2 (468 aa).

Residues serine 287, tryptophan 347–valine 348, histidine 365–glutamate 373, and serine 387–glutamine 390 contribute to the UDP-alpha-D-glucose site.

The protein belongs to the UDP-glycosyltransferase family.

May glycosylate diterpenes or flavonols in leaves. This chain is UDP-glycosyltransferase 89B2, found in Stevia rebaudiana (Stevia).